Here is a 317-residue protein sequence, read N- to C-terminus: UDP-3-O-acylglucosamine N-acyltransferase (317 aa).

The active-site Proton acceptor is histidine 229.

The protein belongs to the transferase hexapeptide repeat family. LpxD subfamily. In terms of assembly, homotrimer.

It carries out the reaction a UDP-3-O-[(3R)-3-hydroxyacyl]-alpha-D-glucosamine + a (3R)-hydroxyacyl-[ACP] = a UDP-2-N,3-O-bis[(3R)-3-hydroxyacyl]-alpha-D-glucosamine + holo-[ACP] + H(+). It functions in the pathway bacterial outer membrane biogenesis; LPS lipid A biosynthesis. Its function is as follows. Catalyzes the N-acylation of UDP-3-O-acylglucosamine using 3-hydroxyacyl-ACP as the acyl donor. Is involved in the biosynthesis of lipid A, a phosphorylated glycolipid that anchors the lipopolysaccharide to the outer membrane of the cell. The polypeptide is UDP-3-O-acylglucosamine N-acyltransferase (Campylobacter curvus (strain 525.92)).